Here is a 212-residue protein sequence, read N- to C-terminus: Glycerol-3-phosphate acyltransferase (212 aa).

Transmembrane regions (helical) follow at residues 3–23, 78–98, 115–135, and 155–177; these read ILLA…VVVS, DVAV…PVFF, AVHP…AFFF, and FLFG…LLVW.

Belongs to the PlsY family. In terms of assembly, probably interacts with PlsX.

The protein localises to the cell inner membrane. It catalyses the reaction an acyl phosphate + sn-glycerol 3-phosphate = a 1-acyl-sn-glycero-3-phosphate + phosphate. Its pathway is lipid metabolism; phospholipid metabolism. Functionally, catalyzes the transfer of an acyl group from acyl-phosphate (acyl-PO(4)) to glycerol-3-phosphate (G3P) to form lysophosphatidic acid (LPA). This enzyme utilizes acyl-phosphate as fatty acyl donor, but not acyl-CoA or acyl-ACP. This chain is Glycerol-3-phosphate acyltransferase, found in Burkholderia ambifaria (strain ATCC BAA-244 / DSM 16087 / CCUG 44356 / LMG 19182 / AMMD) (Burkholderia cepacia (strain AMMD)).